A 341-amino-acid chain; its full sequence is Glycerol-1-phosphate dehydrogenase [NAD(P)+] (341 aa).

NAD(+) contacts are provided by residues 81-85 and 103-106; these read GKAID and TTAS. Asp-108 is a binding site for substrate. Ser-112 is an NAD(+) binding site. Asp-151 contacts substrate. The Zn(2+) site is built by Asp-151 and His-232. Residue His-236 coordinates substrate. Residue His-253 participates in Zn(2+) binding.

Belongs to the glycerol-1-phosphate dehydrogenase family. Zn(2+) serves as cofactor.

It is found in the cytoplasm. It carries out the reaction sn-glycerol 1-phosphate + NAD(+) = dihydroxyacetone phosphate + NADH + H(+). The enzyme catalyses sn-glycerol 1-phosphate + NADP(+) = dihydroxyacetone phosphate + NADPH + H(+). It functions in the pathway membrane lipid metabolism; glycerophospholipid metabolism. Its function is as follows. Catalyzes the NAD(P)H-dependent reduction of dihydroxyacetonephosphate (DHAP or glycerone phosphate) to glycerol 1-phosphate (G1P). The G1P thus generated is used as the glycerophosphate backbone of phospholipids in the cellular membranes of Archaea. In Methanococcus aeolicus (strain ATCC BAA-1280 / DSM 17508 / OCM 812 / Nankai-3), this protein is Glycerol-1-phosphate dehydrogenase [NAD(P)+].